A 556-amino-acid chain; its full sequence is 2-succinyl-5-enolpyruvyl-6-hydroxy-3-cyclohexene-1-carboxylate synthase (556 aa).

The protein belongs to the TPP enzyme family. MenD subfamily. Homodimer. Mg(2+) is required as a cofactor. Mn(2+) serves as cofactor. The cofactor is thiamine diphosphate.

The enzyme catalyses isochorismate + 2-oxoglutarate + H(+) = 5-enolpyruvoyl-6-hydroxy-2-succinyl-cyclohex-3-ene-1-carboxylate + CO2. It functions in the pathway quinol/quinone metabolism; 1,4-dihydroxy-2-naphthoate biosynthesis; 1,4-dihydroxy-2-naphthoate from chorismate: step 2/7. It participates in quinol/quinone metabolism; menaquinone biosynthesis. Functionally, catalyzes the thiamine diphosphate-dependent decarboxylation of 2-oxoglutarate and the subsequent addition of the resulting succinic semialdehyde-thiamine pyrophosphate anion to isochorismate to yield 2-succinyl-5-enolpyruvyl-6-hydroxy-3-cyclohexene-1-carboxylate (SEPHCHC). The sequence is that of 2-succinyl-5-enolpyruvyl-6-hydroxy-3-cyclohexene-1-carboxylate synthase from Staphylococcus epidermidis (strain ATCC 12228 / FDA PCI 1200).